The chain runs to 42 residues: Iota-conotoxin-like R11.16 (42 aa).

Cystine bridges form between cysteine 5/cysteine 19, cysteine 12/cysteine 22, cysteine 18/cysteine 27, and cysteine 21/cysteine 36.

It belongs to the conotoxin I1 superfamily. In terms of tissue distribution, expressed by the venom duct.

It localises to the secreted. Its function is as follows. Iota-conotoxins bind to voltage-gated sodium channels (Nav) and act as agonists by shifting the voltage-dependence of activation to more hyperpolarized levels. Produces general excitatory symptoms. In Conus radiatus (Rayed cone), this protein is Iota-conotoxin-like R11.16.